A 343-amino-acid chain; its full sequence is Small ribosomal subunit biogenesis GTPase RsgA (343 aa).

Residues 116–275 enclose the CP-type G domain; it reads RGQLKPVAAN…LIDSPGIREF (160 aa). Residues 163–166 and 217–225 contribute to the GTP site; these read NKFD and GQSGVGKSS. Positions 299, 304, 306, and 312 each coordinate Zn(2+).

The protein belongs to the TRAFAC class YlqF/YawG GTPase family. RsgA subfamily. In terms of assembly, monomer. Associates with 30S ribosomal subunit, binds 16S rRNA. Requires Zn(2+) as cofactor.

The protein resides in the cytoplasm. Its function is as follows. One of several proteins that assist in the late maturation steps of the functional core of the 30S ribosomal subunit. Helps release RbfA from mature subunits. May play a role in the assembly of ribosomal proteins into the subunit. Circularly permuted GTPase that catalyzes slow GTP hydrolysis, GTPase activity is stimulated by the 30S ribosomal subunit. The polypeptide is Small ribosomal subunit biogenesis GTPase RsgA (Pseudomonas fluorescens (strain Pf0-1)).